A 584-amino-acid polypeptide reads, in one-letter code: Arginine--tRNA ligase (584 aa).

The 'HIGH' region signature appears at 130–140 (PNVAKEMHVGH).

The protein belongs to the class-I aminoacyl-tRNA synthetase family. Monomer.

The protein resides in the cytoplasm. The enzyme catalyses tRNA(Arg) + L-arginine + ATP = L-arginyl-tRNA(Arg) + AMP + diphosphate. The sequence is that of Arginine--tRNA ligase from Protochlamydia amoebophila (strain UWE25).